The following is an 890-amino-acid chain: DNA mismatch repair protein MutS (890 aa).

607 to 614 (GPNMSGKS) serves as a coordination point for ATP.

Belongs to the DNA mismatch repair MutS family.

In terms of biological role, this protein is involved in the repair of mismatches in DNA. It is possible that it carries out the mismatch recognition step. This protein has a weak ATPase activity. The chain is DNA mismatch repair protein MutS from Bacillus mycoides (strain KBAB4) (Bacillus weihenstephanensis).